We begin with the raw amino-acid sequence, 1099 residues long: Transmembrane protein 132D (1099 aa).

A signal peptide spans 1 to 30 (MCPSEMGTLWHHWSPVLISLAALFSKVTEG). Topologically, residues 31–915 (RGILESIQRF…LMQASKGLSD (885 aa)) are extracellular. Asparagine 505 carries N-linked (GlcNAc...) asparagine glycosylation. The disordered stretch occupies residues 797–858 (FGQNDANPNT…LMEGRGTTTD (62 aa)). Low complexity predominate over residues 835 to 848 (GSQEGQYYGSSSMG). Residues 916-936 (LEIGMYALLGVFCLAILVFLI) traverse the membrane as a helical segment. Topologically, residues 937-1099 (NCVTFALKYR…NYMERLHENV (163 aa)) are cytoplasmic.

Belongs to the TMEM132 family. Interacts (via C-terminus) with NCKAP. In terms of tissue distribution, expressed in mature oligodendrocytes. Detected in the brain, lung, pancreas and testis. Highly expressed in mature neurons of the adult nervous system.

Its subcellular location is the membrane. Regulate neuronals morphology via inhibition of the WAVE regulatory complex (WCR), a complex that controls F-actin cytoskeletal dynamics. This is Transmembrane protein 132D from Homo sapiens (Human).